A 126-amino-acid polypeptide reads, in one-letter code: Fluoride-specific ion channel FluC (126 aa).

4 helical membrane-spanning segments follow: residues 4-24 (LLLV…TSAW), 36-56 (GTLL…TASL), 67-85 (LFLA…SFNY), and 101-121 (AYLL…TLLV). Na(+) is bound by residues G75 and T78.

Belongs to the fluoride channel Fluc/FEX (TC 1.A.43) family.

It is found in the cell inner membrane. The enzyme catalyses fluoride(in) = fluoride(out). Its activity is regulated as follows. Na(+) is not transported, but it plays an essential structural role and its presence is essential for fluoride channel function. In terms of biological role, fluoride-specific ion channel. Important for reducing fluoride concentration in the cell, thus reducing its toxicity. The polypeptide is Fluoride-specific ion channel FluC (Anaeromyxobacter dehalogenans (strain 2CP-1 / ATCC BAA-258)).